Consider the following 235-residue polypeptide: Putative quercetin 2,3-dioxygenase ZMO1337 (235 aa).

A divalent metal cation-binding residues include His-57, His-59, His-101, and Glu-103.

Belongs to the pirin family. It depends on a divalent metal cation as a cofactor.

The catalysed reaction is quercetin + O2 = 2-(3,4-dihydroxybenzoyloxy)-4,6-dihydroxybenzoate + CO. It participates in flavonoid metabolism; quercetin degradation. Functionally, putative quercetin 2,3-dioxygenase. The protein is Putative quercetin 2,3-dioxygenase ZMO1337 of Zymomonas mobilis subsp. mobilis (strain ATCC 31821 / ZM4 / CP4).